The sequence spans 144 residues: Cytochrome c-type biogenesis protein CcmE (144 aa).

Topologically, residues 1–7 (MKPRHKR) are cytoplasmic. The chain crosses the membrane as a helical; Signal-anchor for type II membrane protein span at residues 8 to 28 (ALMIVAALAVIGIAALLILNA). At 29–144 (LNSNIALYVT…EQAQKNGSAK (116 aa)) the chain is on the extracellular side. Residues histidine 121 and tyrosine 125 each contribute to the heme site.

The protein belongs to the CcmE/CycJ family.

It is found in the cell membrane. Its function is as follows. Heme chaperone required for the biogenesis of c-type cytochromes. Transiently binds heme delivered by CcmC and transfers the heme to apo-cytochromes in a process facilitated by CcmF and CcmH. The chain is Cytochrome c-type biogenesis protein CcmE from Polynucleobacter asymbioticus (strain DSM 18221 / CIP 109841 / QLW-P1DMWA-1) (Polynucleobacter necessarius subsp. asymbioticus).